Reading from the N-terminus, the 378-residue chain is AT-hook motif nuclear-localized protein 5 (378 aa).

Disordered regions lie at residues 30–70 (QVAS…AEHR), 88–160 (VQPT…GRKQ), and 302–378 (NNNK…LTRG). The segment covering 104–113 (VKKKRGRPRK) has biased composition (basic residues). The Bipartite nuclear localization signal motif lies at 105 to 113 (KKKRGRPRK). DNA-binding regions (a.T hook) lie at residues 105–117 (KKKRGRPRKYVPD) and 147–159 (KRARGRPPGTGRK). Positions 171-314 (TSAGLAFAPH…KTIKQEIKPK (144 aa)) constitute a PPC domain. Polar residues-rich tracts occupy residues 316–327 (EPTNSEMETTPG) and 335–345 (STGQHTPQNFP).

Interacts with AHL29.

The protein localises to the nucleus. Transcription factor that specifically binds AT-rich DNA sequences related to the nuclear matrix attachment regions (MARs). The protein is AT-hook motif nuclear-localized protein 5 of Arabidopsis thaliana (Mouse-ear cress).